The chain runs to 530 residues: Autoinducer-2 kinase (530 aa).

Belongs to the FGGY kinase family.

The protein resides in the cytoplasm. The catalysed reaction is (S)-4,5-dihydroxypentane-2,3-dione + ATP = (2S)-2-hydroxy-3,4-dioxopentyl phosphate + ADP + H(+). Functionally, catalyzes the phosphorylation of autoinducer-2 (AI-2) to phospho-AI-2, which subsequently inactivates the transcriptional regulator LsrR and leads to the transcription of the lsr operon. Phosphorylates the ring-open form of (S)-4,5-dihydroxypentane-2,3-dione (DPD), which is the precursor to all AI-2 signaling molecules, at the C5 position. This chain is Autoinducer-2 kinase, found in Escherichia coli O9:H4 (strain HS).